Consider the following 273-residue polypeptide: MTREITVGGVKIGGGRPLALVAGPCVIENETATLRCAERLMSICNGVGISLIFKASYDKANRTSVTAFRGPGMKEGLRILAKVKEALGVPVLSDIHSIEQVEPAADVLDVLQIPAFLCRQTDLLVAAANTGKVINVKKGQFLAPWDMKNVVGKISSCGNENIILTERGASFGYNNLVVDMRSFPIMRSTGYPVIFDATHSVQLPGGEGTSSGGQREYVEFLSRAAVAAGVDGIFMEVHEEPEQALCDGPNSVRLDDMPALLKKLKSIDAIVNQ.

This sequence belongs to the KdsA family.

It is found in the cytoplasm. The enzyme catalyses D-arabinose 5-phosphate + phosphoenolpyruvate + H2O = 3-deoxy-alpha-D-manno-2-octulosonate-8-phosphate + phosphate. It functions in the pathway carbohydrate biosynthesis; 3-deoxy-D-manno-octulosonate biosynthesis; 3-deoxy-D-manno-octulosonate from D-ribulose 5-phosphate: step 2/3. The protein operates within bacterial outer membrane biogenesis; lipopolysaccharide biosynthesis. This Geobacter sp. (strain M21) protein is 2-dehydro-3-deoxyphosphooctonate aldolase.